The primary structure comprises 133 residues: Endoribonuclease YbeY (133 aa).

Zn(2+) is bound by residues His105, His109, and His115.

It belongs to the endoribonuclease YbeY family. Zn(2+) is required as a cofactor.

The protein resides in the cytoplasm. Single strand-specific metallo-endoribonuclease involved in late-stage 70S ribosome quality control and in maturation of the 3' terminus of the 16S rRNA. This is Endoribonuclease YbeY from Lawsonia intracellularis (strain PHE/MN1-00).